A 246-amino-acid polypeptide reads, in one-letter code: NAD-dependent protein deacylase (246 aa).

Residues 1 to 245 (MKEFITKHRD…ELIREILDNP (245 aa)) enclose the Deacetylase sirtuin-type domain. 20 to 39 (GAGISAESGIPTFRGSEGLW) is a binding site for NAD(+). Positions 64 and 67 each coordinate substrate. Residue 98–101 (QNVD) participates in NAD(+) binding. Catalysis depends on H116, which acts as the Proton acceptor. Positions 124, 127, 146, and 149 each coordinate Zn(2+). Residues 186 to 188 (GTS), 212 to 214 (NPE), and T230 contribute to the NAD(+) site.

Belongs to the sirtuin family. Class III subfamily. The cofactor is Zn(2+).

The protein localises to the cytoplasm. It carries out the reaction N(6)-acetyl-L-lysyl-[protein] + NAD(+) + H2O = 2''-O-acetyl-ADP-D-ribose + nicotinamide + L-lysyl-[protein]. It catalyses the reaction N(6)-succinyl-L-lysyl-[protein] + NAD(+) + H2O = 2''-O-succinyl-ADP-D-ribose + nicotinamide + L-lysyl-[protein]. NAD-dependent lysine deacetylase and desuccinylase that specifically removes acetyl and succinyl groups on target proteins. Modulates the activities of several proteins which are inactive in their acylated form. The polypeptide is NAD-dependent protein deacylase (Leptospira interrogans serogroup Icterohaemorrhagiae serovar copenhageni (strain Fiocruz L1-130)).